Reading from the N-terminus, the 86-residue chain is Anti-adapter protein IraP (86 aa).

Residues 1 to 38 are a coiled coil; that stretch reads MKNLIAELLVKLAQKEEEAKELTVQVEALEIVVTALLR.

This sequence belongs to the IraP family. In terms of assembly, interacts with RssB.

The protein localises to the cytoplasm. In terms of biological role, inhibits RpoS proteolysis by regulating RssB activity, thereby increasing the stability of the sigma stress factor RpoS especially during phosphate starvation, but also in stationary phase and during nitrogen starvation. Its effect on RpoS stability is due to its interaction with RssB, which probably blocks the interaction of RssB with RpoS, and the consequent delivery of the RssB-RpoS complex to the ClpXP protein degradation pathway. This Klebsiella pneumoniae subsp. pneumoniae (strain ATCC 700721 / MGH 78578) protein is Anti-adapter protein IraP.